Reading from the N-terminus, the 895-residue chain is uncharacterized protein (895 aa).

Residues 257 to 283 (KSHKYPPGPPDNSSSNTSGQQNTSNTS) form a disordered region. Residues 268–283 (NSSSNTSGQQNTSNTS) are compositionally biased toward low complexity.

This is an uncharacterized protein from Acanthamoeba polyphaga mimivirus (APMV).